The chain runs to 322 residues: p55-v-Fos-transforming protein (322 aa).

Residues 69–95 form a disordered region; sequence APGGRGQSIGRRGKVEQLSPEEEEKRR. The 64-residue stretch at 91-154 folds into the bZIP domain; it reads EEKRRIRRER…EKLEFILAAH (64 aa). Positions 93 to 113 are basic motif; the sequence is KRRIRRERNKMAAAKCRNRRR. Residues 119-147 form a leucine-zipper region; it reads LQAETDQLEEEKSALQAEIANLLKEKEKL. The segment at 298 to 322 is disordered; it reads AAHRKGSSSNEPSSDSLSSPTLLAL. A compositionally biased stretch (low complexity) spans 304 to 316; that stretch reads SSSNEPSSDSLSS.

Belongs to the bZIP family. Fos subfamily.

It localises to the host nucleus. The polypeptide is p55-v-Fos-transforming protein (V-FOS) (Galliformes).